The chain runs to 471 residues: MGGAVVDEGPTGIKAPDGGWGWAVLFGCFIITGFSYAFPKAVSVFFKELMHEFGIGYSDTAWISSILLAMLYGTGPLCSMCVNRFGCRPVMLVGGLFASLGMVAASFCRSIIQIYLTTGVITGLGLALNFQPSLIMLNRYFNKRRPMANGLAAAGSPVFLCALSPLGQLLQDHYGWRGGFLILGGLLLNCCVCAALMRPLVAPQASGGAEPHGPQRPSPRLLDLSVFRDRGFLIYAVAASIMVLGLFVPPVFVVSYAKDMGVPDTKAAFLLTILGFIDIFARPTAGFITGLKKVRPYSVYLFSFAMFFNGFTDLTGSTASDYGGLVVFCIFFGISYGMVGALQFEVLMAIVGTQKFSSAIGLVLLLEAVAVLIGPPSGGKLLDATKVYKYVFILAGAEVLTSSLVLLLGNFFCIGKRKRPEVTKPEEVASEEEKLHKPPVDVRVDSREVEHFLKAEPEKNGEVVHTPETSV.

Over 1-17 (MGGAVVDEGPTGIKAPD) the chain is Cytoplasmic. The helical transmembrane segment at 18 to 38 (GGWGWAVLFGCFIITGFSYAF) threads the bilayer. Topologically, residues 39 to 61 (PKAVSVFFKELMHEFGIGYSDTA) are extracellular. A helical membrane pass occupies residues 62–82 (WISSILLAMLYGTGPLCSMCV). Residues 83 to 84 (NR) lie on the Cytoplasmic side of the membrane. Residues 85–105 (FGCRPVMLVGGLFASLGMVAA) traverse the membrane as a helical segment. Over 106 to 109 (SFCR) the chain is Extracellular. A helical membrane pass occupies residues 110 to 130 (SIIQIYLTTGVITGLGLALNF). Topologically, residues 131–149 (QPSLIMLNRYFNKRRPMAN) are cytoplasmic. The chain crosses the membrane as a helical span at residues 150–170 (GLAAAGSPVFLCALSPLGQLL). Residues 171 to 179 (QDHYGWRGG) lie on the Extracellular side of the membrane. Residues 180–200 (FLILGGLLLNCCVCAALMRPL) form a helical membrane-spanning segment. The Cytoplasmic segment spans residues 201–231 (VAPQASGGAEPHGPQRPSPRLLDLSVFRDRG). The chain crosses the membrane as a helical span at residues 232–252 (FLIYAVAASIMVLGLFVPPVF). At 253 to 267 (VVSYAKDMGVPDTKA) the chain is on the extracellular side. A helical membrane pass occupies residues 268 to 288 (AFLLTILGFIDIFARPTAGFI). Topologically, residues 289–298 (TGLKKVRPYS) are cytoplasmic. Residues 299–319 (VYLFSFAMFFNGFTDLTGSTA) form a helical membrane-spanning segment. Over 320-321 (SD) the chain is Extracellular. The helical transmembrane segment at 322-342 (YGGLVVFCIFFGISYGMVGAL) threads the bilayer. The Cytoplasmic portion of the chain corresponds to 343–355 (QFEVLMAIVGTQK). The helical transmembrane segment at 356–376 (FSSAIGLVLLLEAVAVLIGPP) threads the bilayer. The Extracellular segment spans residues 377 to 391 (SGGKLLDATKVYKYV). Residues 392 to 412 (FILAGAEVLTSSLVLLLGNFF) form a helical membrane-spanning segment. At 413–471 (CIGKRKRPEVTKPEEVASEEEKLHKPPVDVRVDSREVEHFLKAEPEKNGEVVHTPETSV) the chain is on the cytoplasmic side. 2 basolateral sorting signal regions span residues 429-447 (ASEEEKLHKPPVDVRVDSR) and 447-471 (REVEHFLKAEPEKNGEVVHTPETSV). A Phosphoserine modification is found at Ser430. Phosphothreonine is present on Thr466. Ser470 is modified (phosphoserine).

Belongs to the major facilitator superfamily. Monocarboxylate porter (TC 2.A.1.13) family. As to quaternary structure, interacts with BSG; interaction mediates SLC16A3 targeting to the plasma membrane. In terms of tissue distribution, detected in testis, small intestine, parotid gland, lung and brain. Small amounts are detected in heart, kidney and spleen. Expressed in skeletal muscle.

It is found in the cell membrane. The protein localises to the basolateral cell membrane. It catalyses the reaction (S)-lactate(in) + H(+)(in) = (S)-lactate(out) + H(+)(out). It carries out the reaction pyruvate(out) + H(+)(out) = pyruvate(in) + H(+)(in). Proton-dependent transporter of monocarboxylates such as L-lactate and pyruvate. Plays a predominant role in the L-lactate efflux from highly glycolytic cells. The chain is Monocarboxylate transporter 4 (Slc16a3) from Rattus norvegicus (Rat).